The following is a 690-amino-acid chain: Elongation factor G (690 aa).

Positions glutamate 8–leucine 283 constitute a tr-type G domain. Residues alanine 17–threonine 24, aspartate 81–histidine 85, and asparagine 135–aspartate 138 each bind GTP.

It belongs to the TRAFAC class translation factor GTPase superfamily. Classic translation factor GTPase family. EF-G/EF-2 subfamily.

It is found in the cytoplasm. Its function is as follows. Catalyzes the GTP-dependent ribosomal translocation step during translation elongation. During this step, the ribosome changes from the pre-translocational (PRE) to the post-translocational (POST) state as the newly formed A-site-bound peptidyl-tRNA and P-site-bound deacylated tRNA move to the P and E sites, respectively. Catalyzes the coordinated movement of the two tRNA molecules, the mRNA and conformational changes in the ribosome. The sequence is that of Elongation factor G from Novosphingobium aromaticivorans (strain ATCC 700278 / DSM 12444 / CCUG 56034 / CIP 105152 / NBRC 16084 / F199).